The primary structure comprises 196 residues: S-norcoclaurine synthase 2 (196 aa).

Residues 1–19 (MRMEVVLVVFLMFIGTINC) form the signal peptide. Dopamine is bound at residue 104 to 106 (YRE). K118 functions as the Proton donor in the catalytic mechanism. D137 lines the (4-hydroxyphenyl)acetaldehyde pocket.

Belongs to the BetVI family.

It carries out the reaction (4-hydroxyphenyl)acetaldehyde + dopamine = (S)-norcoclaurine + H2O. With respect to regulation, not inhibited by O-phenanthroline or EDTA. Its function is as follows. Involved in the biosynthesis of the common precursor of all benzylisoquinoline alkaloids such as morphine, sanguinarine, codeine or berberine. Condenses dopamine and pyruvic acid or 4-hydroxyphenylpyruvate. This chain is S-norcoclaurine synthase 2 (PR10A), found in Coptis japonica (Japanese goldthread).